Here is a 138-residue protein sequence, read N- to C-terminus: Ribosome-binding factor A (138 aa).

This sequence belongs to the RbfA family. Monomer. Binds 30S ribosomal subunits, but not 50S ribosomal subunits or 70S ribosomes.

Its subcellular location is the cytoplasm. One of several proteins that assist in the late maturation steps of the functional core of the 30S ribosomal subunit. Associates with free 30S ribosomal subunits (but not with 30S subunits that are part of 70S ribosomes or polysomes). Required for efficient processing of 16S rRNA. May interact with the 5'-terminal helix region of 16S rRNA. The chain is Ribosome-binding factor A from Bradyrhizobium sp. (strain ORS 278).